The chain runs to 93 residues: Pyrimidine/purine nucleoside phosphorylase (93 aa).

The protein belongs to the nucleoside phosphorylase PpnP family.

The catalysed reaction is a purine D-ribonucleoside + phosphate = a purine nucleobase + alpha-D-ribose 1-phosphate. The enzyme catalyses adenosine + phosphate = alpha-D-ribose 1-phosphate + adenine. It catalyses the reaction cytidine + phosphate = cytosine + alpha-D-ribose 1-phosphate. It carries out the reaction guanosine + phosphate = alpha-D-ribose 1-phosphate + guanine. The catalysed reaction is inosine + phosphate = alpha-D-ribose 1-phosphate + hypoxanthine. The enzyme catalyses thymidine + phosphate = 2-deoxy-alpha-D-ribose 1-phosphate + thymine. It catalyses the reaction uridine + phosphate = alpha-D-ribose 1-phosphate + uracil. It carries out the reaction xanthosine + phosphate = alpha-D-ribose 1-phosphate + xanthine. Its function is as follows. Catalyzes the phosphorolysis of diverse nucleosides, yielding D-ribose 1-phosphate and the respective free bases. Can use uridine, adenosine, guanosine, cytidine, thymidine, inosine and xanthosine as substrates. Also catalyzes the reverse reactions. The protein is Pyrimidine/purine nucleoside phosphorylase of Pseudomonas syringae pv. syringae (strain B728a).